The primary structure comprises 344 residues: Uroporphyrinogen decarboxylase (344 aa).

Substrate contacts are provided by residues 25–29 (RQAGR), D75, Y152, S207, and H323.

It belongs to the uroporphyrinogen decarboxylase family. As to quaternary structure, homodimer.

The protein localises to the cytoplasm. It carries out the reaction uroporphyrinogen III + 4 H(+) = coproporphyrinogen III + 4 CO2. The protein operates within porphyrin-containing compound metabolism; protoporphyrin-IX biosynthesis; coproporphyrinogen-III from 5-aminolevulinate: step 4/4. Its function is as follows. Catalyzes the decarboxylation of four acetate groups of uroporphyrinogen-III to yield coproporphyrinogen-III. This chain is Uroporphyrinogen decarboxylase, found in Roseobacter denitrificans (strain ATCC 33942 / OCh 114) (Erythrobacter sp. (strain OCh 114)).